The sequence spans 229 residues: 5'-methylthioadenosine/S-adenosylhomocysteine nucleosidase (229 aa).

Residue Glu-12 is the Proton acceptor of the active site. Substrate contacts are provided by residues Gly-78, Met-152, and 173–174; that span reads ME. Asp-197 serves as the catalytic Proton donor.

This sequence belongs to the PNP/UDP phosphorylase family. MtnN subfamily.

It carries out the reaction S-adenosyl-L-homocysteine + H2O = S-(5-deoxy-D-ribos-5-yl)-L-homocysteine + adenine. The catalysed reaction is S-methyl-5'-thioadenosine + H2O = 5-(methylsulfanyl)-D-ribose + adenine. The enzyme catalyses 5'-deoxyadenosine + H2O = 5-deoxy-D-ribose + adenine. It participates in amino-acid biosynthesis; L-methionine biosynthesis via salvage pathway; S-methyl-5-thio-alpha-D-ribose 1-phosphate from S-methyl-5'-thioadenosine (hydrolase route): step 1/2. Its function is as follows. Catalyzes the irreversible cleavage of the glycosidic bond in both 5'-methylthioadenosine (MTA) and S-adenosylhomocysteine (SAH/AdoHcy) to adenine and the corresponding thioribose, 5'-methylthioribose and S-ribosylhomocysteine, respectively. Also cleaves 5'-deoxyadenosine, a toxic by-product of radical S-adenosylmethionine (SAM) enzymes, into 5-deoxyribose and adenine. In Oceanobacillus iheyensis (strain DSM 14371 / CIP 107618 / JCM 11309 / KCTC 3954 / HTE831), this protein is 5'-methylthioadenosine/S-adenosylhomocysteine nucleosidase.